The chain runs to 218 residues: Uracil-DNA glycosylase (218 aa).

Asp60 acts as the Proton acceptor in catalysis.

The protein belongs to the uracil-DNA glycosylase (UDG) superfamily. UNG family.

Its subcellular location is the cytoplasm. It carries out the reaction Hydrolyzes single-stranded DNA or mismatched double-stranded DNA and polynucleotides, releasing free uracil.. Its function is as follows. Excises uracil residues from the DNA which can arise as a result of misincorporation of dUMP residues by DNA polymerase or due to deamination of cytosine. The chain is Uracil-DNA glycosylase from Francisella philomiragia subsp. philomiragia (strain ATCC 25017 / CCUG 19701 / FSC 153 / O#319-036).